Reading from the N-terminus, the 200-residue chain is Small ribosomal subunit protein uS4 (200 aa).

A disordered region spans residues threonine 22 to arginine 42. The S4 RNA-binding domain occupies serine 92–lysine 152.

Belongs to the universal ribosomal protein uS4 family. Part of the 30S ribosomal subunit. Contacts protein S5. The interaction surface between S4 and S5 is involved in control of translational fidelity.

Its function is as follows. One of the primary rRNA binding proteins, it binds directly to 16S rRNA where it nucleates assembly of the body of the 30S subunit. With S5 and S12 plays an important role in translational accuracy. This is Small ribosomal subunit protein uS4 (rpsD) from Geobacillus stearothermophilus (Bacillus stearothermophilus).